We begin with the raw amino-acid sequence, 461 residues long: Photosystem II CP43 reaction center protein (461 aa).

A propeptide spanning residues 1 to 2 (ME) is cleaved from the precursor. N-acetylthreonine is present on threonine 3. Phosphothreonine is present on threonine 3. Transmembrane regions (helical) follow at residues 57–81 (LFEV…PHLA), 122–143 (LIGP…KDKS), 166–188 (KSVY…RKIT), 243–263 (KPFA…LSYS), and 279–300 (WFNN…ASQA). Position 355 (glutamate 355) interacts with [CaMn4O5] cluster. A helical transmembrane segment spans residues 435 to 459 (RARAAAAGFEKGIDRDTEPVLSMTP).

It belongs to the PsbB/PsbC family. PsbC subfamily. As to quaternary structure, PSII is composed of 1 copy each of membrane proteins PsbA, PsbB, PsbC, PsbD, PsbE, PsbF, PsbH, PsbI, PsbJ, PsbK, PsbL, PsbM, PsbT, PsbX, PsbY, PsbZ, Psb30/Ycf12, at least 3 peripheral proteins of the oxygen-evolving complex and a large number of cofactors. It forms dimeric complexes. Requires Binds multiple chlorophylls and provides some of the ligands for the Ca-4Mn-5O cluster of the oxygen-evolving complex. It may also provide a ligand for a Cl- that is required for oxygen evolution. PSII binds additional chlorophylls, carotenoids and specific lipids. as cofactor.

The protein localises to the plastid. It localises to the chloroplast thylakoid membrane. One of the components of the core complex of photosystem II (PSII). It binds chlorophyll and helps catalyze the primary light-induced photochemical processes of PSII. PSII is a light-driven water:plastoquinone oxidoreductase, using light energy to abstract electrons from H(2)O, generating O(2) and a proton gradient subsequently used for ATP formation. The protein is Photosystem II CP43 reaction center protein of Psilotum nudum (Whisk fern).